The primary structure comprises 409 residues: MDPIEFIQKSASSIASTMHKLKLKYNPFSEKPIRGNTKFFVGRVSELREIGEILGSALHGSVANAAIVGTKGIGKSSMLNIIYYATKKQGHWVVEMTASQVTPRQFLIQLLYNILTENIITMSGTIKSDYMEHSSRILDMYRKLNNYGDKVPIHYPRERIERDLEYLINEVKSPDKLCIILIDEADQFAKKSCLSLLQFFHSFLYEEGILTFMAGSPTLMDDLTKISPPIKDRIPKIINMPPLSKDESYDLIRRRLEDAHIDGAEEFEPFTEEAIHKIVEECDGIPRKIIMTCSESISIAIRKGLTKIDEKVVKEAMHSLGISVGHQILNHLTPAQSEIVRAMAELGGSATVTQLAEYLKKSPSTIGTHLSDIYEMGYIYKEREGNNVYYKLSKELRDVLIGEDDELEM.

The region spanning 305-409 (LTKIDEKVVK…LIGEDDELEM (105 aa)) is the HTH arsR-type domain.

This is an uncharacterized protein from Methanocaldococcus jannaschii (strain ATCC 43067 / DSM 2661 / JAL-1 / JCM 10045 / NBRC 100440) (Methanococcus jannaschii).